Reading from the N-terminus, the 420-residue chain is Tyrosine--tRNA ligase (420 aa).

Tyr-33 is an L-tyrosine binding site. The short motif at 38–47 (PTADSLHIGH) is the 'HIGH' region element. L-tyrosine is bound by residues Tyr-168 and Gln-172. The 'KMSKS' region signature appears at 231 to 235 (KFGKT). An ATP-binding site is contributed by Lys-234. The region spanning 353–419 (MLLVDALIKV…GKKNYYLVKL (67 aa)) is the S4 RNA-binding domain.

The protein belongs to the class-I aminoacyl-tRNA synthetase family. TyrS type 1 subfamily. As to quaternary structure, homodimer.

Its subcellular location is the cytoplasm. It carries out the reaction tRNA(Tyr) + L-tyrosine + ATP = L-tyrosyl-tRNA(Tyr) + AMP + diphosphate + H(+). In terms of biological role, catalyzes the attachment of tyrosine to tRNA(Tyr) in a two-step reaction: tyrosine is first activated by ATP to form Tyr-AMP and then transferred to the acceptor end of tRNA(Tyr). In Desulfitobacterium hafniense (strain Y51), this protein is Tyrosine--tRNA ligase.